A 429-amino-acid chain; its full sequence is UPF0761 membrane protein ABO_1543 (429 aa).

The next 6 helical transmembrane spans lie at 45 to 65, 102 to 122, 141 to 161, 184 to 204, 216 to 236, and 256 to 278; these read LFAI…VPAL, LTVL…STVE, LLMY…GLAI, WLAV…YTVV, LGAA…TFFI, and LLWI…ALVV.

Belongs to the UPF0761 family.

Its subcellular location is the cell inner membrane. The protein is UPF0761 membrane protein ABO_1543 of Alcanivorax borkumensis (strain ATCC 700651 / DSM 11573 / NCIMB 13689 / SK2).